We begin with the raw amino-acid sequence, 539 residues long: Chaperonin GroEL (539 aa).

Residues 29–32 (TLGP), 86–90 (DGTTT), Gly413, 476–478 (NAA), and Asp492 contribute to the ATP site.

Belongs to the chaperonin (HSP60) family. Forms a cylinder of 14 subunits composed of two heptameric rings stacked back-to-back. Interacts with the co-chaperonin GroES.

The protein localises to the cytoplasm. The enzyme catalyses ATP + H2O + a folded polypeptide = ADP + phosphate + an unfolded polypeptide.. Functionally, together with its co-chaperonin GroES, plays an essential role in assisting protein folding. The GroEL-GroES system forms a nano-cage that allows encapsulation of the non-native substrate proteins and provides a physical environment optimized to promote and accelerate protein folding. The chain is Chaperonin GroEL from Parageobacillus thermoglucosidasius (Geobacillus thermoglucosidasius).